The sequence spans 427 residues: Adenylosuccinate synthetase (427 aa).

Residues Gly-12–Lys-18 and Gly-40–Thr-42 contribute to the GTP site. The active-site Proton acceptor is the Asp-13. Mg(2+) is bound by residues Asp-13 and Gly-40. Residues Asp-13–Lys-16, Asn-38–His-41, Thr-126, Arg-140, Gln-221, Thr-236, and Arg-299 contribute to the IMP site. His-41 serves as the catalytic Proton donor. Ser-295–Arg-301 is a substrate binding site. GTP contacts are provided by residues Arg-301, Lys-327–Asp-329, and Ser-409–Gly-411.

It belongs to the adenylosuccinate synthetase family. As to quaternary structure, homodimer. The cofactor is Mg(2+).

The protein resides in the cytoplasm. The enzyme catalyses IMP + L-aspartate + GTP = N(6)-(1,2-dicarboxyethyl)-AMP + GDP + phosphate + 2 H(+). It participates in purine metabolism; AMP biosynthesis via de novo pathway; AMP from IMP: step 1/2. In terms of biological role, plays an important role in the de novo pathway of purine nucleotide biosynthesis. Catalyzes the first committed step in the biosynthesis of AMP from IMP. This Borrelia recurrentis (strain A1) protein is Adenylosuccinate synthetase.